A 437-amino-acid polypeptide reads, in one-letter code: GTPase Der (437 aa).

2 consecutive EngA-type G domains span residues 4–167 (PIVA…PDNA) and 175–352 (IHFS…QHHR). GTP-binding positions include 10–17 (GRPNVGKS), 57–61 (DTGGI), 119–122 (NKVD), 181–188 (GRPNVGKS), 229–233 (DTAGI), and 294–297 (NKWD). The KH-like domain maps to 353–437 (QRIQSAVLND…PIHLIKRQRQ (85 aa)).

This sequence belongs to the TRAFAC class TrmE-Era-EngA-EngB-Septin-like GTPase superfamily. EngA (Der) GTPase family. In terms of assembly, associates with the 50S ribosomal subunit.

In terms of biological role, GTPase that plays an essential role in the late steps of ribosome biogenesis. This chain is GTPase Der, found in Limosilactobacillus reuteri (strain DSM 20016) (Lactobacillus reuteri).